The primary structure comprises 264 residues: Thiazole synthase (264 aa).

Catalysis depends on Lys-106, which acts as the Schiff-base intermediate with DXP. 1-deoxy-D-xylulose 5-phosphate-binding positions include Gly-167, 193-194 (AG), and 215-216 (NS).

Belongs to the ThiG family. Homotetramer. Forms heterodimers with either ThiH or ThiS.

The protein localises to the cytoplasm. The catalysed reaction is [ThiS sulfur-carrier protein]-C-terminal-Gly-aminoethanethioate + 2-iminoacetate + 1-deoxy-D-xylulose 5-phosphate = [ThiS sulfur-carrier protein]-C-terminal Gly-Gly + 2-[(2R,5Z)-2-carboxy-4-methylthiazol-5(2H)-ylidene]ethyl phosphate + 2 H2O + H(+). Its pathway is cofactor biosynthesis; thiamine diphosphate biosynthesis. Its function is as follows. Catalyzes the rearrangement of 1-deoxy-D-xylulose 5-phosphate (DXP) to produce the thiazole phosphate moiety of thiamine. Sulfur is provided by the thiocarboxylate moiety of the carrier protein ThiS. In vitro, sulfur can be provided by H(2)S. This Ectopseudomonas mendocina (strain ymp) (Pseudomonas mendocina) protein is Thiazole synthase.